We begin with the raw amino-acid sequence, 545 residues long: MSPNKRILRAVYLSLFFIGIFMLLDDFLFSRKASSFMNEEIKFDLNKDFDIDNSLIDEDFTFNLSDNSEDINVDTDIYHATFATFGGNLISLKLKNHLNLDKKPTEIVKVHPQNQSLFYITLDKLSKSLFLYEQIDSHVHDFKTNVEVNGKYYEYIKRYTFSKSNEYLIKLEIFLNNIDVNDDIGIDFYKFVLNSGIEELSAKGKLQYNNYLSHAIYYDTKLRYGKDGLNIANPKWVGAGTKYFEVLVSKENMKVEFKHENKVLNAFILNKLDNKNVSDVFYIYAGPRDNKYLDIFNQRELNSFGLSNVEFGMSVEKSLLYFLQVPMQLIMQIFYNVIPNWGLSIMFLTIVVRILIFPLTFKSFRATAELSKLQPKMKEIQVKFKSDPKRLNEEMGKLYREEGVNPIGGCFPILLQLPVFFALYGLVNNFFVLRGASFIPGWIDDLSIGDSIYYFGYKVFAWTDIRILPFIMMITQLLSTIVSSNVSFKSLGSQQKFLYFGMPIMFFFILYDMPSGLLIYWITTNIFTILQQYYIKMNLSERRNK.

6 consecutive transmembrane segments (helical) span residues 10–30 (AVYLSLFFIGIFMLLDDFLFS), 319–339 (LLYFLQVPMQLIMQIFYNVIP), 341–361 (WGLSIMFLTIVVRILIFPLTF), 407–427 (IGGCFPILLQLPVFFALYGLV), 467–487 (ILPFIMMITQLLSTIVSSNVS), and 502–522 (MPIMFFFILYDMPSGLLIYWI).

The protein belongs to the OXA1/ALB3/YidC family. Type 1 subfamily. Interacts with the Sec translocase complex via SecD. Specifically interacts with transmembrane segments of nascent integral membrane proteins during membrane integration.

The protein resides in the cell inner membrane. Functionally, required for the insertion and/or proper folding and/or complex formation of integral membrane proteins into the membrane. Involved in integration of membrane proteins that insert both dependently and independently of the Sec translocase complex, as well as at least some lipoproteins. Aids folding of multispanning membrane proteins. The sequence is that of Membrane protein insertase YidC from Borrelia recurrentis (strain A1).